The primary structure comprises 198 residues: Adenylate kinase (198 aa).

10–15 (GAGKGT) is a binding site for ATP. The segment at 30 to 59 (STGDMLRAAVQAGSEVGKRAKAVMDAGELV) is NMP. AMP contacts are provided by residues Thr-31, Arg-36, 57-59 (ELV), 85-88 (GYPR), and Gln-92. The tract at residues 126–142 (KRAEDAKAAGQPVRKDD) is LID. Residue Arg-127 participates in ATP binding. Residues Arg-139 and Arg-150 each contribute to the AMP site. Residue Ala-178 coordinates ATP.

It belongs to the adenylate kinase family. Monomer.

It is found in the cytoplasm. The enzyme catalyses AMP + ATP = 2 ADP. It participates in purine metabolism; AMP biosynthesis via salvage pathway; AMP from ADP: step 1/1. Catalyzes the reversible transfer of the terminal phosphate group between ATP and AMP. Plays an important role in cellular energy homeostasis and in adenine nucleotide metabolism. This is Adenylate kinase from Mesorhizobium japonicum (strain LMG 29417 / CECT 9101 / MAFF 303099) (Mesorhizobium loti (strain MAFF 303099)).